Consider the following 239-residue polypeptide: uncharacterized protein (239 aa).

The tract at residues 129-155 is disordered; the sequence is DSLDDEDDNMISSNDPTKSPEEHDTTT. The residue at position 160 (Ser160) is a Phosphoserine.

This is an uncharacterized protein from Schizosaccharomyces pombe (strain 972 / ATCC 24843) (Fission yeast).